Here is a 140-residue protein sequence, read N- to C-terminus: Endoribonuclease YbeY (140 aa).

Positions 105, 109, and 115 each coordinate Zn(2+).

The protein belongs to the endoribonuclease YbeY family. The cofactor is Zn(2+).

The protein resides in the cytoplasm. Its function is as follows. Single strand-specific metallo-endoribonuclease involved in late-stage 70S ribosome quality control and in maturation of the 3' terminus of the 16S rRNA. The polypeptide is Endoribonuclease YbeY (Flavobacterium psychrophilum (strain ATCC 49511 / DSM 21280 / CIP 103535 / JIP02/86)).